The primary structure comprises 491 residues: MANYFNTLNLRQQLAQLGKCRFMGRDEFADGASYLQGKKVVIVGCGAQGLNQGLNMRDSGLDISYALRKEAIAEKRASWRKATENGFKVGTYEELIPQADLVVNLTPDKQHSDVVRSVQPLMKDGAALGYSHGFNIVEVGEQIRKDITVVMVAPKCPGTEVREEYKRGFGVPTLIAVHPENDPKGEGMAIAKAWAAATGGHRAGVLESSFVAEVKSDLMGEQTILCGMLQAGSLLCFDKLVAEGTDPAYAEKLIQFGWETITEALKQGGITLMMDRLSNPAKLRAYALSEQLKEIMAPLFQKHMDDIISGEFSSGMMADWANDDKKLLTWREETGKTAFETAPQFEGKIGEQEYFDKGVLMIAMVKAGVELAFETMVDSGIIEESAYYESLHELPLIANTIARKRLYEMNVVISDTAEYGNYLFSYACVPLLKPFMAELQPGDLGSAIPEGAVDNAQLRDVNDAIRSHAIEQVGKKLRGYMTDMKRIAVAG.

One can recognise a KARI N-terminal Rossmann domain in the interval 15 to 208 (AQLGKCRFMG…GGHRAGVLES (194 aa)). NADP(+) is bound by residues 45-48 (CGAQ), Arg68, Arg76, Ser78, and 108-110 (DKQ). The active site involves His132. An NADP(+)-binding site is contributed by Gly158. 2 consecutive KARI C-terminal knotted domains span residues 209–344 (SFVA…TAPQ) and 345–484 (FEGK…MTDM). 4 residues coordinate Mg(2+): Asp217, Glu221, Glu389, and Glu393. Residue Ser414 coordinates substrate.

It belongs to the ketol-acid reductoisomerase family. It depends on Mg(2+) as a cofactor.

It carries out the reaction (2R)-2,3-dihydroxy-3-methylbutanoate + NADP(+) = (2S)-2-acetolactate + NADPH + H(+). The enzyme catalyses (2R,3R)-2,3-dihydroxy-3-methylpentanoate + NADP(+) = (S)-2-ethyl-2-hydroxy-3-oxobutanoate + NADPH + H(+). It participates in amino-acid biosynthesis; L-isoleucine biosynthesis; L-isoleucine from 2-oxobutanoate: step 2/4. The protein operates within amino-acid biosynthesis; L-valine biosynthesis; L-valine from pyruvate: step 2/4. Involved in the biosynthesis of branched-chain amino acids (BCAA). Catalyzes an alkyl-migration followed by a ketol-acid reduction of (S)-2-acetolactate (S2AL) to yield (R)-2,3-dihydroxy-isovalerate. In the isomerase reaction, S2AL is rearranged via a Mg-dependent methyl migration to produce 3-hydroxy-3-methyl-2-ketobutyrate (HMKB). In the reductase reaction, this 2-ketoacid undergoes a metal-dependent reduction by NADPH to yield (R)-2,3-dihydroxy-isovalerate. The sequence is that of Ketol-acid reductoisomerase (NADP(+)) from Salmonella choleraesuis (strain SC-B67).